Here is a 413-residue protein sequence, read N- to C-terminus: Serine hydroxymethyltransferase (413 aa).

(6S)-5,6,7,8-tetrahydrofolate-binding positions include Leu-117 and 121–123; that span reads GHL. Lys-226 carries the N6-(pyridoxal phosphate)lysine modification. 349–351 is a binding site for (6S)-5,6,7,8-tetrahydrofolate; the sequence is SPF.

This sequence belongs to the SHMT family. Homodimer. Requires pyridoxal 5'-phosphate as cofactor.

The protein localises to the cytoplasm. The catalysed reaction is (6R)-5,10-methylene-5,6,7,8-tetrahydrofolate + glycine + H2O = (6S)-5,6,7,8-tetrahydrofolate + L-serine. Its pathway is one-carbon metabolism; tetrahydrofolate interconversion. The protein operates within amino-acid biosynthesis; glycine biosynthesis; glycine from L-serine: step 1/1. Functionally, catalyzes the reversible interconversion of serine and glycine with tetrahydrofolate (THF) serving as the one-carbon carrier. This reaction serves as the major source of one-carbon groups required for the biosynthesis of purines, thymidylate, methionine, and other important biomolecules. Also exhibits THF-independent aldolase activity toward beta-hydroxyamino acids, producing glycine and aldehydes, via a retro-aldol mechanism. This is Serine hydroxymethyltransferase from Pelobacter propionicus (strain DSM 2379 / NBRC 103807 / OttBd1).